The chain runs to 567 residues: uncharacterized protein (567 aa).

Residues 1–26 (MPSEKATTRHLPGAVETLSPRTGRRP) form a disordered region. Helical transmembrane passes span 57–77 (AILVTNVIGLIVGAMLLTVAF), 90–110 (VSFGIVPGYCVLAFILGTYWL), 142–162 (VALAVLFLWGAAAALWTIIYG), 173–193 (LFSMGVIGVVAATSCYLLTEF), 221–241 (MLVWLLCSGVPNVGVALTAIF), and 257–277 (VLILWAPLLIFGFILMWILAW). The HAMP domain maps to 278 to 329 (LTATPVRVVREALNRVEQGDLSGDLVVFDGTELGELQRGFNRMVEGLRERER). Residues 361-485 (AVVFVDIVGS…EPVNEAARLC (125 aa)) form the Guanylate cyclase domain.

This sequence belongs to the adenylyl cyclase class-3 family.

Its subcellular location is the cell membrane. This is an uncharacterized protein from Mycobacterium tuberculosis (strain ATCC 25618 / H37Rv).